The following is a 117-amino-acid chain: MNKFIYETMYILRPDMTEEKVEQAITKYKSMLEEQGAYDIKIQHRGKLRLAYEINNQREGIYIQMNYQGPPTQIAILERAMRLSEEVIRYLTVKQELPKTPETDTQKNLEPAVALAE.

Belongs to the bacterial ribosomal protein bS6 family.

Functionally, binds together with bS18 to 16S ribosomal RNA. This Trichodesmium erythraeum (strain IMS101) protein is Small ribosomal subunit protein bS6.